Here is a 220-residue protein sequence, read N- to C-terminus: Glutathione S-transferase 2 (220 aa).

The GST N-terminal domain maps to 2–88 (VVTLGYWDIR…YIARKHNMCG (87 aa)). Residues 7–8 (YW), 43–46 (PSDW), Lys-50, 59–60 (NL), and 72–73 (QS) contribute to the glutathione site. Residues 90–208 (TEVEKQRVDV…RSGRFMKAPI (119 aa)) form the GST C-terminal domain. Tyr-116 serves as a coordination point for substrate.

The protein belongs to the GST superfamily. Mu family. As to quaternary structure, homodimer.

It localises to the cytoplasm. The enzyme catalyses RX + glutathione = an S-substituted glutathione + a halide anion + H(+). Functionally, conjugation of reduced glutathione to a wide number of exogenous and endogenous hydrophobic electrophiles. Participates in the formation of novel hepoxilin regioisomers. The protein is Glutathione S-transferase 2 (GSTM2) of Gallus gallus (Chicken).